The chain runs to 138 residues: Small ribosomal subunit protein uS11B (138 aa).

A disordered region spans residues 118-138 (DVTPVPSDSTRKKGGRRGRRL). Basic residues predominate over residues 129–138 (KKGGRRGRRL).

The protein belongs to the universal ribosomal protein uS11 family. As to quaternary structure, component of the small ribosomal subunit (SSU). Mature yeast ribosomes consist of a small (40S) and a large (60S) subunit. The 40S small subunit contains 1 molecule of ribosomal RNA (18S rRNA) and 33 different proteins (encoded by 57 genes). The large 60S subunit contains 3 rRNA molecules (25S, 5.8S and 5S rRNA) and 46 different proteins (encoded by 81 genes). uS11 interacts with eS1 forming part of the mRNA exit tunnel. uS11 interacts with snoRNA U3. uS11 interacts with MPP10. Component of the ribosomal small subunit (SSU) processome composed of at least 40 protein subunits and snoRNA U3.

The protein resides in the cytoplasm. The protein localises to the nucleus. Its subcellular location is the nucleolus. Functionally, component of the ribosome, a large ribonucleoprotein complex responsible for the synthesis of proteins in the cell. The small ribosomal subunit (SSU) binds messenger RNAs (mRNAs) and translates the encoded message by selecting cognate aminoacyl-transfer RNA (tRNA) molecules. The large subunit (LSU) contains the ribosomal catalytic site termed the peptidyl transferase center (PTC), which catalyzes the formation of peptide bonds, thereby polymerizing the amino acids delivered by tRNAs into a polypeptide chain. The nascent polypeptides leave the ribosome through a tunnel in the LSU and interact with protein factors that function in enzymatic processing, targeting, and the membrane insertion of nascent chains at the exit of the ribosomal tunnel. uS11 is involved in nucleolar processing of pre-18S ribosomal RNA and ribosome assembly. The chain is Small ribosomal subunit protein uS11B from Saccharomyces cerevisiae (strain ATCC 204508 / S288c) (Baker's yeast).